A 321-amino-acid polypeptide reads, in one-letter code: Cytochrome c biogenesis protein CcsA (321 aa).

Helical transmembrane passes span 9-29 (ILTHISFSTISIVITIHLITL), 44-64 (GMIATFFSITGFLVSRWVSSG), 68-88 (LSNLYESLIFLSWTLYILHTI), 143-163 (MLLSYATLLCGSLLSAALLII), 225-245 (VISLGFTLLTVGILCGAVWAN), 259-273 (TWAFITWTIFAIYLH), and 288-308 (VASIGFLIIWICYFGINLLGI).

This sequence belongs to the CcmF/CycK/Ccl1/NrfE/CcsA family. May interact with Ccs1.

The protein localises to the plastid. Its subcellular location is the chloroplast thylakoid membrane. Its function is as follows. Required during biogenesis of c-type cytochromes (cytochrome c6 and cytochrome f) at the step of heme attachment. The sequence is that of Cytochrome c biogenesis protein CcsA from Zea mays (Maize).